The following is an 85-amino-acid chain: RNA-binding protein Hfq (85 aa).

In terms of domain architecture, Sm spans 9-68; the sequence is DPFLNALRRERIPVSIYLVNGIKLQGQIESFDQFVILLKNTVNQMVYKHAISTVVPARPV. A disordered region spans residues 66–85; sequence RPVNHHHASDRPATLEKTEE. Residues 72 to 85 show a composition bias toward basic and acidic residues; sequence HASDRPATLEKTEE.

It belongs to the Hfq family. In terms of assembly, homohexamer.

Functionally, RNA chaperone that binds small regulatory RNA (sRNAs) and mRNAs to facilitate mRNA translational regulation in response to envelope stress, environmental stress and changes in metabolite concentrations. Also binds with high specificity to tRNAs. The chain is RNA-binding protein Hfq from Photobacterium profundum (strain SS9).